The following is a 352-amino-acid chain: MRVLGIETTCDETAAAVVRLEPGGAGEILSNEVMSQIAEHAAYGGVVPEIAARAHIDIIDRLVLRALAHAGTRLADLDGIAAAAGPGLIGGVIVGLTTAKALALASRKPFIAVNHLEAHALTARLTDALEFPYLLLLVSGGHTQLVAVRGVGDYLRLGSTVDDAVGEAFDKIAKMLGLPYPGGPEVEKRAAEGNAARFDFPRPMLGRPKPDFSLSGLKTAVRLEMERLNSLSPTDVADLCASFQAAVVDMIIDRSRVGLRLFRETVGPSNAMVVAGGVAANGAIRRALMRFCGESGMRLVLPPPQLCTDNGAMIAWAGLERLSLGLIDDLTFAARARWPLDANAEAVHHGKA.

Residues histidine 115 and histidine 119 each contribute to the Fe cation site. Substrate-binding positions include 137–141 (LVSGG), aspartate 170, glycine 183, and asparagine 281. Aspartate 309 serves as a coordination point for Fe cation.

The protein belongs to the KAE1 / TsaD family. The cofactor is Fe(2+).

It localises to the cytoplasm. The enzyme catalyses L-threonylcarbamoyladenylate + adenosine(37) in tRNA = N(6)-L-threonylcarbamoyladenosine(37) in tRNA + AMP + H(+). Functionally, required for the formation of a threonylcarbamoyl group on adenosine at position 37 (t(6)A37) in tRNAs that read codons beginning with adenine. Is involved in the transfer of the threonylcarbamoyl moiety of threonylcarbamoyl-AMP (TC-AMP) to the N6 group of A37, together with TsaE and TsaB. TsaD likely plays a direct catalytic role in this reaction. The protein is tRNA N6-adenosine threonylcarbamoyltransferase of Methylocapsa acidiphila.